Here is a 145-residue protein sequence, read N- to C-terminus: Transcriptional regulator ZitR (145 aa).

The HTH marR-type domain occupies 1-142 (MSLANQIDQF…ISQFLSVLTE (142 aa)). Zn(2+) is bound by residues glutamate 23, cysteine 29, glutamate 40, and histidine 41. Residues 53–76 (NARIAEQLKISPAAVTKALKKLQE) constitute a DNA-binding region (H-T-H motif). Zn(2+) contacts are provided by glutamate 106, histidine 107, and histidine 111.

Homodimer.

With respect to regulation, zinc acts as a corepressor and is required for DNA-binding activity. Binds up to two zinc ligands per monomer. Inactive under zinc deprivation. Zinc-responsive regulator that represses expression of the zit operon in the presence of zinc. Acts by binding two palindromic operator sites overlapping the -35 and -10 boxes of the zit promoter. Could be a sensitive sensor of intracellular zinc to efficiently respond to zinc variations in the environment. This Lactococcus lactis subsp. cremoris (strain MG1363) protein is Transcriptional regulator ZitR (zitR).